The chain runs to 349 residues: ATPase GET3 (349 aa).

An ATP-binding site is contributed by 26-33 (KGGVGKTT). The active site involves Asp-57. Positions 243 and 270 each coordinate ATP. Zn(2+) contacts are provided by Cys-280 and Cys-283.

It belongs to the arsA ATPase family. Homodimer. Component of the Golgi to ER traffic (GET) complex, which is composed of GET1, GET2 and GET3. Within the complex, GET1 and GET2 form a heterotetramer which is stabilized by phosphatidylinositol binding and which binds to the GET3 homodimer. Interacts with the chloride channel protein GEF1.

Its subcellular location is the cytoplasm. It is found in the endoplasmic reticulum. The protein resides in the golgi apparatus. Functionally, ATPase required for the post-translational delivery of tail-anchored (TA) proteins to the endoplasmic reticulum. Recognizes and selectively binds the transmembrane domain of TA proteins in the cytosol. This complex then targets to the endoplasmic reticulum by membrane-bound receptors GET1 and GET2, where the tail-anchored protein is released for insertion. This process is regulated by ATP binding and hydrolysis. ATP binding drives the homodimer towards the closed dimer state, facilitating recognition of newly synthesized TA membrane proteins. ATP hydrolysis is required for insertion. Subsequently, the homodimer reverts towards the open dimer state, lowering its affinity for the GET1-GET2 receptor, and returning it to the cytosol to initiate a new round of targeting. Cooperates with the HDEL receptor ERD2 to mediate the ATP-dependent retrieval of resident ER proteins that contain a C-terminal H-D-E-L retention signal from the Golgi to the ER. Involved in low-level resistance to the oxyanions arsenite and arsenate, and in heat tolerance. This is ATPase GET3 from Clavispora lusitaniae (strain ATCC 42720) (Yeast).